Here is a 922-residue protein sequence, read N- to C-terminus: Coronin-7 (922 aa).

4 WD repeats span residues 75 to 115, 124 to 163, 166 to 205, and 209 to 253; these read CHSD…EALP, PEEL…HLTE, AHKD…QASQ, and AHEN…SALA. The interval 386 to 462 is disordered; it reads NPAHRPHPRF…TSPSQRSLQS (77 aa). Residues 423–456 show a composition bias toward low complexity; that stretch reads SEGFSSPSSLVSPSTPSSLGLSLSSTSGIGTSPS. Phosphoserine occurs at positions 459 and 462. K469 participates in a covalent cross-link: Glycyl lysine isopeptide (Lys-Gly) (interchain with G-Cter in ubiquitin). WD repeat units follow at residues 539-579, 589-629, 632-671, and 725-765; these read QNGA…LKNV, GHTE…EQLR, GHQD…LPLQ, and DVAP…PFFL. Residues 854-922 form a disordered region; that stretch reads LQPPGMTPVS…FEGVDEDEWD (69 aa). The residue at position 874 (T874) is a Phosphothreonine. Residues 881 to 893 show a composition bias toward basic and acidic residues; sequence LEEKSDQQKKEEL. The residue at position 912 (S912) is a Phosphoserine.

Belongs to the WD repeat coronin family. In terms of assembly, interacts with clathrin adapter AP1 complex. This interaction takes place at Golgi membranes and not AP1-positive endosomal membranes. Interacts (when ubiquitinated at Lys-469) with EPS15. In terms of processing, the membrane-associated form is phosphorylated on tyrosine residues. Ubiquitinated via 'Lys-33'-linked ubiquitin chains by the BCR(KLHL20) E3 ubiquitin ligase complex: 'Lys-33'-linked ubiquitination promotes interaction with EPS15 and facilitates actin polymerization at the trans-Golgi network, thereby facilitating post-Golgi trafficking. Deubiquitinated by ZRANB1/TRABID.

The protein localises to the golgi apparatus membrane. It localises to the golgi apparatus. Its subcellular location is the trans-Golgi network. The protein resides in the cytoplasmic vesicle. It is found in the cytoplasm. The protein localises to the cytosol. Its function is as follows. F-actin regulator involved in anterograde Golgi to endosome transport: upon ubiquitination via 'Lys-33'-linked ubiquitin chains by the BCR(KLHL20) E3 ubiquitin ligase complex, interacts with EPS15 and localizes to the trans-Golgi network, where it promotes actin polymerization, thereby facilitating post-Golgi trafficking. May play a role in the maintenance of the Golgi apparatus morphology. This is Coronin-7 (Coro7) from Rattus norvegicus (Rat).